A 123-amino-acid chain; its full sequence is Large ribosomal subunit protein bL12 (123 aa).

The interval 98–123 (KEGVSKEEAEEIKSKLEDAGATVELK) is disordered. Residues 100–115 (GVSKEEAEEIKSKLED) are compositionally biased toward basic and acidic residues.

The protein belongs to the bacterial ribosomal protein bL12 family. Homodimer. Part of the ribosomal stalk of the 50S ribosomal subunit. Forms a multimeric L10(L12)X complex, where L10 forms an elongated spine to which 2 to 4 L12 dimers bind in a sequential fashion. Binds GTP-bound translation factors.

Functionally, forms part of the ribosomal stalk which helps the ribosome interact with GTP-bound translation factors. Is thus essential for accurate translation. This Halothermothrix orenii (strain H 168 / OCM 544 / DSM 9562) protein is Large ribosomal subunit protein bL12.